We begin with the raw amino-acid sequence, 327 residues long: Poly(ribitol-phosphate) beta-N-acetylglucosaminyltransferase TarP (327 aa).

UDP-N-acetyl-alpha-D-glucosamine contacts are provided by residues Pro9, Asp41, Asn68, Arg76, and 92-94 (DSD). Asp94 is a Mn(2+) binding site. The Proton acceptor role is filled by Asp181.

This sequence belongs to the glycosyltransferase 2 family. Homotrimer. Requires Mn(2+) as cofactor.

The enzyme catalyses 4-O-[(D-ribitylphospho)(n)-di{(2R)-glycerylphospho}]-N-acetyl-beta-D-mannosaminyl-(1-&gt;4)-N-acetyl-alpha-D-glucosaminyl di-trans,octa-cis-undecaprenyl diphosphate + n UDP-N-acetyl-alpha-D-glucosamine = 4-O-([3-N-acetyl-beta-D-glucosaminyl-1-D-ribitylphospho](n)-di{[2R]-1-glycerylphospho})-N-acetyl-beta-D-mannosaminyl-(1-&gt;4)-N-acetyl-alpha-D-glucosaminyl di-trans,octa-cis-undecaprenyl diphosphate + n UDP + n H(+). The protein operates within cell wall biogenesis; poly(ribitol phosphate) teichoic acid biosynthesis. Functionally, attaches beta-O-GlcNAc (beta-O-N-acetyl-D-glucosamine) residues to the C3 position of poly(RboP)-wall teichoic acids (WTAs). Attenuates immunogenicity of WTA and protects S.aureus against adaptative host defenses by allowing bacteria to evade recognition by preexisting anti-S.aureus antibodies. Also protects the cell from podophage infection. In Staphylococcus aureus (strain N315), this protein is Poly(ribitol-phosphate) beta-N-acetylglucosaminyltransferase TarP.